The sequence spans 1094 residues: Protein transport protein Sec24C (1094 aa).

The segment at 1-338 (MNVNQSVPPV…PIQVIEDDRN (338 aa)) is disordered. Positions 8-19 (PPVPPFGQPQPI) are enriched in pro residues. 2 stretches are compositionally biased toward low complexity: residues 20 to 29 (YPGYHQSSYG) and 60 to 77 (SRAPPSSGAPPASTAQAP). Over residues 90 to 101 (DVQNGPSSTVQM) the composition is skewed to polar residues. Over residues 123–132 (VLQPYGPPPT) the composition is skewed to pro residues. Polar residues-rich tracts occupy residues 133–144 (SAQVATQLSGMQ), 165–175 (SLASASGSFPN), 189–215 (PLSQAQGHPGIQTPQRSAPSQASSFTP), and 240–251 (SVSQPNHVSSPP). The residue at position 214 (threonine 214) is a Phosphothreonine. The span at 273–282 (PQQPGYQPQQ) shows a compositional bias: low complexity. The Zn(2+) site is built by cysteine 425, cysteine 428, cysteine 447, and cysteine 450. The tract at residues 425-450 (CNRCKAYMCPFMQFIEGGRRFQCCFC) is zinc finger-like. The Gelsolin-like repeat unit spans residues 962–1034 (TTEPPAVRAS…DNPLSKKVRG (73 aa)).

It belongs to the SEC23/SEC24 family. SEC24 subfamily. In terms of assembly, COPII is composed of at least five proteins: the Sec23/24 complex, the Sec13/31 complex and Sar1. Interacts with TMED2 and TMED10. Interacts with GOSR2 (via IxM motif) and STX5 (via IxM motif); recruits GOSR2 and STX5 into COPII-coated vesicles. Interacts with DDHD1. Interacts with STING1; promoting STING1 translocation to the COPII vesicles. In terms of tissue distribution, ubiquitous.

The protein resides in the cytoplasmic vesicle. It is found in the COPII-coated vesicle membrane. The protein localises to the endoplasmic reticulum membrane. Its subcellular location is the cytoplasm. It localises to the cytosol. Component of the coat protein complex II (COPII) which promotes the formation of transport vesicles from the endoplasmic reticulum (ER). The coat has two main functions, the physical deformation of the endoplasmic reticulum membrane into vesicles and the selection of cargo molecules for their transport to the Golgi complex. Plays a central role in cargo selection within the COPII complex and together with SEC24D may have a different specificity compared to SEC24A and SEC24B. May more specifically package GPI-anchored proteins through the cargo receptor TMED10. May also be specific for IxM motif-containing cargos like the SNAREs GOSR2 and STX5. This chain is Protein transport protein Sec24C, found in Homo sapiens (Human).